A 159-amino-acid polypeptide reads, in one-letter code: Ribosome maturation factor RimP (159 aa).

Belongs to the RimP family.

The protein localises to the cytoplasm. Its function is as follows. Required for maturation of 30S ribosomal subunits. The chain is Ribosome maturation factor RimP from Geobacter metallireducens (strain ATCC 53774 / DSM 7210 / GS-15).